A 318-amino-acid polypeptide reads, in one-letter code: NAD(P)H-dependent D-xylose reductase (318 aa).

Residue Tyr48 is the Proton donor of the active site. A substrate-binding site is contributed by His110. Residues 165–166, 214–223, and 270–280 each bind NAD(+); these read SN, SSFGPQSFVE, and KSNTVPRLLEN.

The protein belongs to the aldo/keto reductase family.

It catalyses the reaction xylitol + NAD(+) = D-xylose + NADH + H(+). It carries out the reaction xylitol + NADP(+) = D-xylose + NADPH + H(+). The protein operates within carbohydrate metabolism; D-xylose degradation. With respect to regulation, NADP(+) is a potent inhibitor of both the NADPH- and NADH-linked xylose reduction, whereas NAD(+) showS strong inhibition only with the NADH-linked reaction. In terms of biological role, reduces D-xylose into xylitol. Has a preference for NADPH, but can also utilize NADH as cosubstrate. This Scheffersomyces stipitis (strain ATCC 58785 / CBS 6054 / NBRC 10063 / NRRL Y-11545) (Yeast) protein is NAD(P)H-dependent D-xylose reductase (XYL1).